The sequence spans 162 residues: ATP synthase subunit b (162 aa).

A helical transmembrane segment spans residues 8-28; it reads LTGIIQLLNFLILLFVLYKFL.

The protein belongs to the ATPase B chain family. In terms of assembly, F-type ATPases have 2 components, F(1) - the catalytic core - and F(0) - the membrane proton channel. F(1) has five subunits: alpha(3), beta(3), gamma(1), delta(1), epsilon(1). F(0) has three main subunits: a(1), b(2) and c(10-14). The alpha and beta chains form an alternating ring which encloses part of the gamma chain. F(1) is attached to F(0) by a central stalk formed by the gamma and epsilon chains, while a peripheral stalk is formed by the delta and b chains.

It localises to the cell inner membrane. In terms of biological role, f(1)F(0) ATP synthase produces ATP from ADP in the presence of a proton or sodium gradient. F-type ATPases consist of two structural domains, F(1) containing the extramembraneous catalytic core and F(0) containing the membrane proton channel, linked together by a central stalk and a peripheral stalk. During catalysis, ATP synthesis in the catalytic domain of F(1) is coupled via a rotary mechanism of the central stalk subunits to proton translocation. Component of the F(0) channel, it forms part of the peripheral stalk, linking F(1) to F(0). The sequence is that of ATP synthase subunit b from Pseudothermotoga lettingae (strain ATCC BAA-301 / DSM 14385 / NBRC 107922 / TMO) (Thermotoga lettingae).